The chain runs to 105 residues: MTTVSSDRIRIKLKAYDYRILDKAVAEIVDTARNTGASIAGPIPLPTNIHKFTVNRSVHVDKKSREQFEMRIHKRLMDILEPTQQTVDALGKLSLPAGVDVEIKL.

Belongs to the universal ribosomal protein uS10 family. In terms of assembly, part of the 30S ribosomal subunit.

Functionally, involved in the binding of tRNA to the ribosomes. In Lawsonia intracellularis (strain PHE/MN1-00), this protein is Small ribosomal subunit protein uS10.